The sequence spans 860 residues: Nuclear pore complex protein NUP93B (860 aa).

This sequence belongs to the nucleoporin interacting component (NIC) family. As to quaternary structure, part of the nuclear pore complex (NPC). The NPC has an eight-fold symmetrical structure comprising a central transport channel and two rings, the cytoplasmic and nuclear rings, to which eight filaments are attached. The cytoplasmic filaments have loose ends, while the nuclear filaments are joined in a distal ring, forming a nuclear basket. NPCs are highly dynamic in configuration and composition, and can be devided in 3 subcomplexes, the NUP62 subcomplex, the NUP107-160 subcomplex and the NUP93 subcomplex, containing approximately 30 different nucleoporin proteins.

The protein localises to the nucleus envelope. It is found in the nucleus. The protein resides in the nuclear pore complex. This chain is Nuclear pore complex protein NUP93B, found in Arabidopsis thaliana (Mouse-ear cress).